The following is a 354-amino-acid chain: Ornithine carbamoyltransferase, catabolic (354 aa).

Carbamoyl phosphate is bound by residues 67–70, Q94, R118, and 145–148; these read STRT and HPTQ. L-ornithine-binding positions include N177, D241, and 245–246; that span reads SM. Residues 284-285 and R329 contribute to the carbamoyl phosphate site; that span reads CL.

It belongs to the aspartate/ornithine carbamoyltransferase superfamily. OTCase family.

It localises to the cytoplasm. The enzyme catalyses carbamoyl phosphate + L-ornithine = L-citrulline + phosphate + H(+). It functions in the pathway amino-acid degradation; L-arginine degradation via ADI pathway; carbamoyl phosphate from L-arginine: step 2/2. In terms of biological role, reversibly catalyzes the transfer of the carbamoyl group from carbamoyl phosphate (CP) to the N(epsilon) atom of ornithine (ORN) to produce L-citrulline. The polypeptide is Ornithine carbamoyltransferase, catabolic (arcB) (Lactococcus lactis subsp. cremoris (Streptococcus cremoris)).